The following is a 103-amino-acid chain: Large ribosomal subunit protein bL21 (103 aa).

The protein belongs to the bacterial ribosomal protein bL21 family. Part of the 50S ribosomal subunit. Contacts protein L20.

Its function is as follows. This protein binds to 23S rRNA in the presence of protein L20. In Verminephrobacter eiseniae (strain EF01-2), this protein is Large ribosomal subunit protein bL21.